Reading from the N-terminus, the 386-residue chain is Methionine aminopeptidase 1 (386 aa).

The C6H2-type zinc finger occupies 6–59 (TRECETEGCHSEAKLQCPTCIKLGIQGSYFCSQECFKGSWATHKLLHKKAKEDK). 8 residues coordinate Zn(2+): Cys9, Cys14, Cys22, Cys25, Cys36, Cys40, His48, and His52. His202 contributes to the a protein binding site. Zn(2+)-binding residues include Asp219, Asp230, and His293. His300 is a binding site for a protein. Residues Glu326 and Glu357 each contribute to the Zn(2+) site.

Belongs to the peptidase M24A family. Methionine aminopeptidase type 1 subfamily. Associates with the 60S ribosomal subunit of the 80S translational complex. Zn(2+) is required as a cofactor. It depends on Co(2+) as a cofactor. Mn(2+) serves as cofactor. The cofactor is Fe(2+).

Its subcellular location is the cytoplasm. It catalyses the reaction Release of N-terminal amino acids, preferentially methionine, from peptides and arylamides.. Cotranslationally removes the N-terminal methionine from nascent proteins. The N-terminal methionine is often cleaved when the second residue in the primary sequence is small and uncharged (Met-Ala-, Cys, Gly, Pro, Ser, Thr, or Val). This chain is Methionine aminopeptidase 1 (metap1), found in Danio rerio (Zebrafish).